Reading from the N-terminus, the 337-residue chain is Pyridoxal 5'-phosphate synthase subunit PdxS (337 aa).

D65 contacts D-ribose 5-phosphate. The active-site Schiff-base intermediate with D-ribose 5-phosphate is K122. G194 contacts D-ribose 5-phosphate. K206 contributes to the D-glyceraldehyde 3-phosphate binding site. D-ribose 5-phosphate is bound by residues G255 and 276-277 (GS).

The protein belongs to the PdxS/SNZ family. In the presence of PdxT, forms a dodecamer of heterodimers.

It catalyses the reaction aldehydo-D-ribose 5-phosphate + D-glyceraldehyde 3-phosphate + L-glutamine = pyridoxal 5'-phosphate + L-glutamate + phosphate + 3 H2O + H(+). It functions in the pathway cofactor biosynthesis; pyridoxal 5'-phosphate biosynthesis. Its function is as follows. Catalyzes the formation of pyridoxal 5'-phosphate from ribose 5-phosphate (RBP), glyceraldehyde 3-phosphate (G3P) and ammonia. The ammonia is provided by the PdxT subunit. Can also use ribulose 5-phosphate and dihydroxyacetone phosphate as substrates, resulting from enzyme-catalyzed isomerization of RBP and G3P, respectively. The protein is Pyridoxal 5'-phosphate synthase subunit PdxS of Pyrobaculum arsenaticum (strain DSM 13514 / JCM 11321 / PZ6).